The sequence spans 167 residues: tRNA-specific adenosine deaminase (167 aa).

In terms of domain architecture, CMP/dCMP-type deaminase spans 6–117 (FSHEYWMRHA…DAKTGAAGSL (112 aa)). Residue histidine 57 participates in Zn(2+) binding. Residue glutamate 59 is the Proton donor of the active site. The Zn(2+) site is built by cysteine 87 and cysteine 90.

This sequence belongs to the cytidine and deoxycytidylate deaminase family. As to quaternary structure, homodimer. Zn(2+) serves as cofactor.

The enzyme catalyses adenosine(34) in tRNA + H2O + H(+) = inosine(34) in tRNA + NH4(+). Functionally, catalyzes the deamination of adenosine to inosine at the wobble position 34 of tRNA(Arg2). The polypeptide is tRNA-specific adenosine deaminase (Escherichia coli O157:H7).